The following is a 301-amino-acid chain: tRNA pseudouridine synthase B (301 aa).

Catalysis depends on D38, which acts as the Nucleophile.

This sequence belongs to the pseudouridine synthase TruB family. Type 1 subfamily.

It catalyses the reaction uridine(55) in tRNA = pseudouridine(55) in tRNA. In terms of biological role, responsible for synthesis of pseudouridine from uracil-55 in the psi GC loop of transfer RNAs. The sequence is that of tRNA pseudouridine synthase B from Lacticaseibacillus paracasei (strain ATCC 334 / BCRC 17002 / CCUG 31169 / CIP 107868 / KCTC 3260 / NRRL B-441) (Lactobacillus paracasei).